A 320-amino-acid chain; its full sequence is o-succinylbenzoate synthase (320 aa).

The Proton donor role is filled by Lys-133. Asp-161, Glu-190, and Asp-213 together coordinate Mg(2+). Lys-235 (proton acceptor) is an active-site residue.

It belongs to the mandelate racemase/muconate lactonizing enzyme family. MenC type 1 subfamily. A divalent metal cation is required as a cofactor.

It catalyses the reaction (1R,6R)-6-hydroxy-2-succinyl-cyclohexa-2,4-diene-1-carboxylate = 2-succinylbenzoate + H2O. It functions in the pathway quinol/quinone metabolism; 1,4-dihydroxy-2-naphthoate biosynthesis; 1,4-dihydroxy-2-naphthoate from chorismate: step 4/7. Its pathway is quinol/quinone metabolism; menaquinone biosynthesis. Converts 2-succinyl-6-hydroxy-2,4-cyclohexadiene-1-carboxylate (SHCHC) to 2-succinylbenzoate (OSB). This is o-succinylbenzoate synthase from Escherichia coli O17:K52:H18 (strain UMN026 / ExPEC).